A 348-amino-acid polypeptide reads, in one-letter code: Phosphoribosylformylglycinamidine cyclo-ligase (348 aa).

This sequence belongs to the AIR synthase family.

It is found in the cytoplasm. It catalyses the reaction 2-formamido-N(1)-(5-O-phospho-beta-D-ribosyl)acetamidine + ATP = 5-amino-1-(5-phospho-beta-D-ribosyl)imidazole + ADP + phosphate + H(+). It participates in purine metabolism; IMP biosynthesis via de novo pathway; 5-amino-1-(5-phospho-D-ribosyl)imidazole from N(2)-formyl-N(1)-(5-phospho-D-ribosyl)glycinamide: step 2/2. In Cereibacter sphaeroides (strain ATCC 17023 / DSM 158 / JCM 6121 / CCUG 31486 / LMG 2827 / NBRC 12203 / NCIMB 8253 / ATH 2.4.1.) (Rhodobacter sphaeroides), this protein is Phosphoribosylformylglycinamidine cyclo-ligase.